The chain runs to 149 residues: Arginine repressor (149 aa).

Belongs to the ArgR family.

It localises to the cytoplasm. It functions in the pathway amino-acid biosynthesis; L-arginine biosynthesis [regulation]. Regulates arginine biosynthesis genes. The protein is Arginine repressor of Listeria welshimeri serovar 6b (strain ATCC 35897 / DSM 20650 / CCUG 15529 / CIP 8149 / NCTC 11857 / SLCC 5334 / V8).